The primary structure comprises 146 residues: MSTTERRRTSARRETLLGDQPGAFASARYARITPMKARRVVDMVRGLPVDEALSLLQFAPQSASETVYKVLESAVANAELTEGLERGDLVVSVAQVDEGPTMKRWRPRAQGRATRINKRTSHITLVVQPADVVAEKKATPKKRKSA.

The protein belongs to the universal ribosomal protein uL22 family. Part of the 50S ribosomal subunit.

Its function is as follows. This protein binds specifically to 23S rRNA; its binding is stimulated by other ribosomal proteins, e.g. L4, L17, and L20. It is important during the early stages of 50S assembly. It makes multiple contacts with different domains of the 23S rRNA in the assembled 50S subunit and ribosome. Functionally, the globular domain of the protein is located near the polypeptide exit tunnel on the outside of the subunit, while an extended beta-hairpin is found that lines the wall of the exit tunnel in the center of the 70S ribosome. The polypeptide is Large ribosomal subunit protein uL22 (Nocardioides sp. (strain ATCC BAA-499 / JS614)).